The primary structure comprises 398 residues: Chorismate synthase (398 aa).

Residues R44 and R50 each coordinate NADP(+). FMN contacts are provided by residues 133–135 (RAS), 261–262 (QA), G306, 321–325 (KPIPT), and R347.

This sequence belongs to the chorismate synthase family. In terms of assembly, homotetramer. It depends on FMNH2 as a cofactor.

It catalyses the reaction 5-O-(1-carboxyvinyl)-3-phosphoshikimate = chorismate + phosphate. It functions in the pathway metabolic intermediate biosynthesis; chorismate biosynthesis; chorismate from D-erythrose 4-phosphate and phosphoenolpyruvate: step 7/7. Functionally, catalyzes the anti-1,4-elimination of the C-3 phosphate and the C-6 proR hydrogen from 5-enolpyruvylshikimate-3-phosphate (EPSP) to yield chorismate, which is the branch point compound that serves as the starting substrate for the three terminal pathways of aromatic amino acid biosynthesis. This reaction introduces a second double bond into the aromatic ring system. In Aquifex aeolicus (strain VF5), this protein is Chorismate synthase.